Reading from the N-terminus, the 417-residue chain is D-inositol 3-phosphate glycosyltransferase (417 aa).

Histidine 15 provides a ligand contact to 1D-myo-inositol 3-phosphate. Residues 21–22 (QP) and glycine 29 each bind UDP-N-acetyl-alpha-D-glucosamine. Residues 26–31 (DAGGMN), lysine 84, tyrosine 117, threonine 141, and arginine 161 contribute to the 1D-myo-inositol 3-phosphate site. 3 residues coordinate UDP-N-acetyl-alpha-D-glucosamine: arginine 241, lysine 246, and valine 299. Mg(2+) contacts are provided by tyrosine 308, arginine 309, and alanine 311. Glutamate 321 and glutamate 329 together coordinate UDP-N-acetyl-alpha-D-glucosamine. Position 335 (threonine 335) interacts with Mg(2+).

This sequence belongs to the glycosyltransferase group 1 family. MshA subfamily. As to quaternary structure, homodimer.

The enzyme catalyses 1D-myo-inositol 3-phosphate + UDP-N-acetyl-alpha-D-glucosamine = 1D-myo-inositol 2-acetamido-2-deoxy-alpha-D-glucopyranoside 3-phosphate + UDP + H(+). Catalyzes the transfer of a N-acetyl-glucosamine moiety to 1D-myo-inositol 3-phosphate to produce 1D-myo-inositol 2-acetamido-2-deoxy-glucopyranoside 3-phosphate in the mycothiol biosynthesis pathway. The polypeptide is D-inositol 3-phosphate glycosyltransferase (Xylanimonas cellulosilytica (strain DSM 15894 / JCM 12276 / CECT 5975 / KCTC 9989 / LMG 20990 / NBRC 107835 / XIL07)).